Consider the following 349-residue polypeptide: Protein-glutamate methylesterase/protein-glutamine glutaminase (349 aa).

A Response regulatory domain is found at Arg5–Met122. Residue Asp56 is modified to 4-aspartylphosphate. The CheB-type methylesterase domain maps to Leu152–Gly344. Active-site residues include Ser164, His190, and Asp286.

The protein belongs to the CheB family. In terms of processing, phosphorylated by CheA. Phosphorylation of the N-terminal regulatory domain activates the methylesterase activity.

It is found in the cytoplasm. The enzyme catalyses [protein]-L-glutamate 5-O-methyl ester + H2O = L-glutamyl-[protein] + methanol + H(+). It catalyses the reaction L-glutaminyl-[protein] + H2O = L-glutamyl-[protein] + NH4(+). Its function is as follows. Involved in chemotaxis. Part of a chemotaxis signal transduction system that modulates chemotaxis in response to various stimuli. Catalyzes the demethylation of specific methylglutamate residues introduced into the chemoreceptors (methyl-accepting chemotaxis proteins or MCP) by CheR. Also mediates the irreversible deamidation of specific glutamine residues to glutamic acid. The protein is Protein-glutamate methylesterase/protein-glutamine glutaminase of Salmonella typhi.